Here is a 245-residue protein sequence, read N- to C-terminus: 1-(5-phosphoribosyl)-5-[(5-phosphoribosylamino)methylideneamino] imidazole-4-carboxamide isomerase (245 aa).

Asp-8 (proton acceptor) is an active-site residue. Asp-130 functions as the Proton donor in the catalytic mechanism.

Belongs to the HisA/HisF family.

It localises to the cytoplasm. It carries out the reaction 1-(5-phospho-beta-D-ribosyl)-5-[(5-phospho-beta-D-ribosylamino)methylideneamino]imidazole-4-carboxamide = 5-[(5-phospho-1-deoxy-D-ribulos-1-ylimino)methylamino]-1-(5-phospho-beta-D-ribosyl)imidazole-4-carboxamide. Its pathway is amino-acid biosynthesis; L-histidine biosynthesis; L-histidine from 5-phospho-alpha-D-ribose 1-diphosphate: step 4/9. This Ectopseudomonas mendocina (strain ymp) (Pseudomonas mendocina) protein is 1-(5-phosphoribosyl)-5-[(5-phosphoribosylamino)methylideneamino] imidazole-4-carboxamide isomerase.